The primary structure comprises 284 residues: Spermidine synthase (284 aa).

The PABS domain occupies 6–241 (NGWFSEISEF…GSIGFILCSL (236 aa)). An S-adenosyl 3-(methylsulfanyl)propylamine-binding site is contributed by Gln37. Residue Tyr67 coordinates putrescine. S-adenosyl 3-(methylsulfanyl)propylamine-binding positions include Gln68, Asp92, Glu112, 143–144 (DG), and Asp161. The Proton acceptor role is filled by Asp161. Putrescine is bound by residues 161-164 (DSSD) and Tyr229.

The protein belongs to the spermidine/spermine synthase family.

The catalysed reaction is S-adenosyl 3-(methylsulfanyl)propylamine + putrescine = S-methyl-5'-thioadenosine + spermidine + H(+). It functions in the pathway amine and polyamine biosynthesis; spermidine biosynthesis; spermidine from putrescine: step 1/1. In terms of biological role, catalyzes the production of spermidine from putrescine and decarboxylated S-adenosylmethionine (dcSAM). Has a strong preference for putrescine as substrate. In Dictyostelium discoideum (Social amoeba), this protein is Spermidine synthase (spsA).